A 122-amino-acid chain; its full sequence is uncharacterized protein (122 aa).

It is found in the mitochondrion. This is an uncharacterized protein from Arabidopsis thaliana (Mouse-ear cress).